Consider the following 404-residue polypeptide: Nicotinate phosphoribosyltransferase (404 aa).

The residue at position 224 (H224) is a Phosphohistidine; by autocatalysis.

It belongs to the NAPRTase family. In terms of processing, transiently phosphorylated on a His residue during the reaction cycle. Phosphorylation strongly increases the affinity for substrates and increases the rate of nicotinate D-ribonucleotide production. Dephosphorylation regenerates the low-affinity form of the enzyme, leading to product release.

The enzyme catalyses nicotinate + 5-phospho-alpha-D-ribose 1-diphosphate + ATP + H2O = nicotinate beta-D-ribonucleotide + ADP + phosphate + diphosphate. It participates in cofactor biosynthesis; NAD(+) biosynthesis; nicotinate D-ribonucleotide from nicotinate: step 1/1. Its function is as follows. Catalyzes the synthesis of beta-nicotinate D-ribonucleotide from nicotinate and 5-phospho-D-ribose 1-phosphate at the expense of ATP. In Proteus mirabilis (strain HI4320), this protein is Nicotinate phosphoribosyltransferase.